Consider the following 813-residue polypeptide: LPS-assembly protein LptD (813 aa).

An N-terminal signal peptide occupies residues 1–22 (MRRALRLLPLPLSIAICLPAMA).

Belongs to the LptD family. In terms of assembly, component of the lipopolysaccharide transport and assembly complex. Interacts with LptE and LptA.

The protein resides in the cell outer membrane. Functionally, together with LptE, is involved in the assembly of lipopolysaccharide (LPS) at the surface of the outer membrane. The sequence is that of LPS-assembly protein LptD from Xanthomonas oryzae pv. oryzae (strain MAFF 311018).